The primary structure comprises 729 residues: Probable pre-mRNA-splicing factor ATP-dependent RNA helicase DEAH3 (729 aa).

One can recognise a Helicase ATP-binding domain in the interval 75-244 (LNTLNSNQTL…FSGAPLMKVP (170 aa)). 88–95 (GETGSGKT) is an ATP binding site. A DEAH box motif is present at residues 191–194 (DEAH). Residues 269 to 449 (TVVQIHMCEP…NTVLTLKKLG (181 aa)) enclose the Helicase C-terminal domain.

This sequence belongs to the DEAD box helicase family. DEAH subfamily. PRP43 sub-subfamily.

It carries out the reaction ATP + H2O = ADP + phosphate + H(+). In terms of biological role, may be involved in pre-mRNA splicing. In Arabidopsis thaliana (Mouse-ear cress), this protein is Probable pre-mRNA-splicing factor ATP-dependent RNA helicase DEAH3.